The primary structure comprises 449 residues: Protein tweety homolog 1-A (449 aa).

Residues M1–A43 lie on the Extracellular side of the membrane. Residues L44–V64 form a helical membrane-spanning segment. Residues Y65–C86 are Cytoplasmic-facing. A helical transmembrane segment spans residues C87 to F107. The Extracellular portion of the chain corresponds to Y108 to W212. An N-linked (GlcNAc...) asparagine glycan is attached at N128. Residues L213–L233 traverse the membrane as a helical segment. Over A234–K238 the chain is Cytoplasmic. The helical transmembrane segment at W239–M259 threads the bilayer. Residues G260–E388 lie on the Extracellular side of the membrane. 2 cysteine pairs are disulfide-bonded: C273–C383 and C301–C368. Residues N282 and N353 are each glycosylated (N-linked (GlcNAc...) asparagine). Residues G389–C409 traverse the membrane as a helical segment. The Cytoplasmic segment spans residues S410–I449.

It belongs to the tweety family. As to quaternary structure, homotetramer; disulfide-linked. Homodimer.

It localises to the cell membrane. The catalysed reaction is chloride(in) = chloride(out). It carries out the reaction L-glutamate(out) = L-glutamate(in). Functionally, may act as a calcium-independent, swelling-dependent volume-regulated anion channel (VRAC-swell) which plays a pivotal role in the process of regulatory volume decrease (RVD) in the brain through the efflux of anions like chloride and organic osmolytes like glutamate. This is Protein tweety homolog 1-A (ttyh1-a) from Xenopus laevis (African clawed frog).